Consider the following 55-residue polypeptide: Large ribosomal subunit protein bL33 (55 aa).

This sequence belongs to the bacterial ribosomal protein bL33 family.

The sequence is that of Large ribosomal subunit protein bL33 from Rhizobium meliloti (strain 1021) (Ensifer meliloti).